The following is a 768-amino-acid chain: Degenerin mec-4 (768 aa).

Over 1 to 109 (MSWMQNLKNY…GEAPNVYYRA (109 aa)) the chain is Cytoplasmic. A helical transmembrane segment spans residues 110–130 (VWVMLFLGCMIMLYLNAQSVL). Residues 131–718 (DKYNRNEKIV…VNLLADFGGQ (588 aa)) are Extracellular-facing. Disordered regions lie at residues 187–221 (AGGN…GKRD) and 237–260 (GSQG…ETTT). Over residues 189-200 (GNKEHDGEKEVI) the composition is skewed to basic and acidic residues. Residues 203 to 212 (APTTPAPTTK) are compositionally biased toward low complexity. The segment covering 243–252 (EQEDKDDEKE) has biased composition (acidic residues). N-linked (GlcNAc...) asparagine glycans are attached at residues asparagine 336, asparagine 357, asparagine 480, asparagine 484, asparagine 503, and asparagine 671. A helical transmembrane segment spans residues 719 to 739 (LGLWCGISFLTCCEFVFLFLE). Topologically, residues 740 to 768 (TAYMSAEHNYSLYKKKKAEKAKKVASGSF) are cytoplasmic.

This sequence belongs to the amiloride-sensitive sodium channel (TC 1.A.6) family. In terms of assembly, the channel is probably composed of at least the mec-2, mec-4, mec-6 and mec-10 subunits.

The protein resides in the membrane. Probable sodium channel subunit. May be needed for mechanosensory transduction (touch sensitivity). Negatively regulates the turning step of male mating behavior. The polypeptide is Degenerin mec-4 (mec-4) (Caenorhabditis briggsae).